A 150-amino-acid chain; its full sequence is UPF0208 membrane protein VC_1099 (150 aa).

Helical transmembrane passes span 42-62 (FAIKVMPAVAAISVLTQMVFA) and 70-90 (AIVVALFAMSLPLQGIWWLGH).

It belongs to the UPF0208 family.

The protein resides in the cell inner membrane. The protein is UPF0208 membrane protein VC_1099 of Vibrio cholerae serotype O1 (strain ATCC 39315 / El Tor Inaba N16961).